A 245-amino-acid chain; its full sequence is Putative transport permease YvfS (245 aa).

Helical transmembrane passes span 20-40, 53-73, 103-123, 137-157, 164-184, and 214-234; these read YFVL…TNVV, HYLM…TLGI, IGQS…GAII, GLWI…IGLM, AGIS…WMPF, and GSPT…FMLL. Positions 20–242 constitute an ABC transmembrane type-2 domain; sequence YFVLWSLIMP…LLSKYIRRKQ (223 aa).

It belongs to the ABC-2 integral membrane protein family.

It is found in the cell membrane. The protein is Putative transport permease YvfS (yvfS) of Bacillus subtilis (strain 168).